The following is a 113-amino-acid chain: Large ribosomal subunit protein eL31B (113 aa).

The protein belongs to the eukaryotic ribosomal protein eL31 family. Component of the large ribosomal subunit (LSU). Mature yeast ribosomes consist of a small (40S) and a large (60S) subunit. The 40S small subunit contains 1 molecule of ribosomal RNA (18S rRNA) and 33 different proteins (encoded by 57 genes). The large 60S subunit contains 3 rRNA molecules (25S, 5.8S and 5S rRNA) and 46 different proteins (encoded by 81 genes).

Its subcellular location is the cytoplasm. Functionally, component of the ribosome, a large ribonucleoprotein complex responsible for the synthesis of proteins in the cell. The small ribosomal subunit (SSU) binds messenger RNAs (mRNAs) and translates the encoded message by selecting cognate aminoacyl-transfer RNA (tRNA) molecules. The large subunit (LSU) contains the ribosomal catalytic site termed the peptidyl transferase center (PTC), which catalyzes the formation of peptide bonds, thereby polymerizing the amino acids delivered by tRNAs into a polypeptide chain. The nascent polypeptides leave the ribosome through a tunnel in the LSU and interact with protein factors that function in enzymatic processing, targeting, and the membrane insertion of nascent chains at the exit of the ribosomal tunnel. The polypeptide is Large ribosomal subunit protein eL31B (Saccharomyces cerevisiae (strain ATCC 204508 / S288c) (Baker's yeast)).